A 123-amino-acid polypeptide reads, in one-letter code: Small ribosomal subunit protein uS13 (123 aa).

The segment at 93–123 (HRKGLPVRGQNTKNNARTRKGPAKAIAGKKK) is disordered. A compositionally biased stretch (basic residues) spans 108–123 (ARTRKGPAKAIAGKKK).

This sequence belongs to the universal ribosomal protein uS13 family. As to quaternary structure, part of the 30S ribosomal subunit. Forms a loose heterodimer with protein S19. Forms two bridges to the 50S subunit in the 70S ribosome.

Functionally, located at the top of the head of the 30S subunit, it contacts several helices of the 16S rRNA. In the 70S ribosome it contacts the 23S rRNA (bridge B1a) and protein L5 of the 50S subunit (bridge B1b), connecting the 2 subunits; these bridges are implicated in subunit movement. Contacts the tRNAs in the A and P-sites. The chain is Small ribosomal subunit protein uS13 from Leuconostoc citreum (strain KM20).